Consider the following 72-residue polypeptide: Beta-defensin 104A (72 aa).

Residues 1-22 (MRRLVLLLAISLLLYQDLPVRS) form the signal peptide. 3 disulfide bridges follow: Cys30–Cys57, Cys37–Cys51, and Cys41–Cys58.

Belongs to the beta-defensin family.

Its subcellular location is the secreted. Has antimicrobial activity. This chain is Beta-defensin 104A (DEFB104A), found in Gorilla gorilla gorilla (Western lowland gorilla).